The chain runs to 56 residues: Large ribosomal subunit protein bL33B (56 aa).

The protein belongs to the bacterial ribosomal protein bL33 family.

The sequence is that of Large ribosomal subunit protein bL33B from Cutibacterium acnes (strain DSM 16379 / KPA171202) (Propionibacterium acnes).